The chain runs to 108 residues: Thiosulfate sulfurtransferase GlpE (108 aa).

In terms of domain architecture, Rhodanese spans 18–106 (ENEGATLADI…WERSGLPIET (89 aa)). The active-site Cysteine persulfide intermediate is the C66.

Belongs to the GlpE family.

The protein resides in the cytoplasm. It catalyses the reaction thiosulfate + hydrogen cyanide = thiocyanate + sulfite + 2 H(+). It carries out the reaction thiosulfate + [thioredoxin]-dithiol = [thioredoxin]-disulfide + hydrogen sulfide + sulfite + 2 H(+). Transferase that catalyzes the transfer of sulfur from thiosulfate to thiophilic acceptors such as cyanide or dithiols. May function in a CysM-independent thiosulfate assimilation pathway by catalyzing the conversion of thiosulfate to sulfite, which can then be used for L-cysteine biosynthesis. This chain is Thiosulfate sulfurtransferase GlpE, found in Actinobacillus pleuropneumoniae serotype 3 (strain JL03).